A 341-amino-acid polypeptide reads, in one-letter code: Aspartate carbamoyltransferase catalytic subunit (341 aa).

Carbamoyl phosphate contacts are provided by Arg-89 and Thr-90. Position 117 (Lys-117) interacts with L-aspartate. Positions 139, 169, and 172 each coordinate carbamoyl phosphate. 2 residues coordinate L-aspartate: Arg-202 and Arg-257. Carbamoyl phosphate contacts are provided by Gly-298 and Pro-299.

This sequence belongs to the aspartate/ornithine carbamoyltransferase superfamily. ATCase family. Heterododecamer (2C3:3R2) of six catalytic PyrB chains organized as two trimers (C3), and six regulatory PyrI chains organized as three dimers (R2).

The catalysed reaction is carbamoyl phosphate + L-aspartate = N-carbamoyl-L-aspartate + phosphate + H(+). It participates in pyrimidine metabolism; UMP biosynthesis via de novo pathway; (S)-dihydroorotate from bicarbonate: step 2/3. In terms of biological role, catalyzes the condensation of carbamoyl phosphate and aspartate to form carbamoyl aspartate and inorganic phosphate, the committed step in the de novo pyrimidine nucleotide biosynthesis pathway. This chain is Aspartate carbamoyltransferase catalytic subunit, found in Paraburkholderia xenovorans (strain LB400).